A 406-amino-acid chain; its full sequence is Leucine aminopeptidase 1 (406 aa).

The signal sequence occupies residues 1 to 18 (MKVTNASLLALLLPAVSG). The propeptide occupies 19-94 (RFVETGEPDR…LRAMTASRKK (76 aa)). Residue asparagine 186 is glycosylated (N-linked (GlcNAc...) asparagine). Zn(2+) contacts are provided by histidine 194, aspartate 213, glutamate 252, and aspartate 279. N-linked (GlcNAc...) asparagine glycosylation is present at asparagine 306. Cysteine 328 and cysteine 332 are disulfide-bonded. Histidine 361 is a Zn(2+) binding site.

This sequence belongs to the peptidase M28 family. M28E subfamily. In terms of assembly, monomer. It depends on Zn(2+) as a cofactor.

Its subcellular location is the secreted. Extracellular aminopeptidase that allows assimilation of proteinaceous substrates. This is Leucine aminopeptidase 1 (LAP1) from Chaetomium globosum (strain ATCC 6205 / CBS 148.51 / DSM 1962 / NBRC 6347 / NRRL 1970) (Soil fungus).